The following is a 152-amino-acid chain: MKKRLFVLSLILLVALDQLSKFWIVSHIALGEVKPFIPGIVSLTYLQNNGAAFSILQDQQWFFVVITVLVIGYAIYYLATHPHLNIWKQLALLLIISGGIGNFIDRLRLAYVIDMIHLDFVDFAIFNVADSYLTVGVILLLICLWKEEDYGN.

Helical transmembrane passes span 5–25, 61–81, and 84–104; these read LFVLSLILLVALDQLSKFWIV, WFFVVITVLVIGYAIYYLATH, and LNIWKQLALLLIISGGIGNFI. Catalysis depends on residues Asp-114 and Asp-130. Residues 125 to 145 form a helical membrane-spanning segment; the sequence is IFNVADSYLTVGVILLLICLW.

This sequence belongs to the peptidase A8 family.

Its subcellular location is the cell membrane. The enzyme catalyses Release of signal peptides from bacterial membrane prolipoproteins. Hydrolyzes -Xaa-Yaa-Zaa-|-(S,diacylglyceryl)Cys-, in which Xaa is hydrophobic (preferably Leu), and Yaa (Ala or Ser) and Zaa (Gly or Ala) have small, neutral side chains.. It participates in protein modification; lipoprotein biosynthesis (signal peptide cleavage). In terms of biological role, this protein specifically catalyzes the removal of signal peptides from prolipoproteins. In Streptococcus pyogenes serotype M1, this protein is Lipoprotein signal peptidase.